We begin with the raw amino-acid sequence, 256 residues long: Triosephosphate isomerase (256 aa).

10 to 12 (NWK) is a substrate binding site. Catalysis depends on histidine 97, which acts as the Electrophile. Glutamate 169 serves as the catalytic Proton acceptor. Residues glycine 175, serine 214, and 235–236 (GG) each bind substrate.

This sequence belongs to the triosephosphate isomerase family. In terms of assembly, homodimer.

The protein resides in the cytoplasm. The enzyme catalyses D-glyceraldehyde 3-phosphate = dihydroxyacetone phosphate. The protein operates within carbohydrate biosynthesis; gluconeogenesis. Its pathway is carbohydrate degradation; glycolysis; D-glyceraldehyde 3-phosphate from glycerone phosphate: step 1/1. Involved in the gluconeogenesis. Catalyzes stereospecifically the conversion of dihydroxyacetone phosphate (DHAP) to D-glyceraldehyde-3-phosphate (G3P). This Actinobacillus pleuropneumoniae serotype 7 (strain AP76) protein is Triosephosphate isomerase.